The sequence spans 156 residues: Small ribosomal subunit protein uS7 (156 aa).

It belongs to the universal ribosomal protein uS7 family. In terms of assembly, part of the 30S ribosomal subunit. Contacts proteins S9 and S11.

In terms of biological role, one of the primary rRNA binding proteins, it binds directly to 16S rRNA where it nucleates assembly of the head domain of the 30S subunit. Is located at the subunit interface close to the decoding center, probably blocks exit of the E-site tRNA. The sequence is that of Small ribosomal subunit protein uS7 from Clostridioides difficile (strain 630) (Peptoclostridium difficile).